The sequence spans 628 residues: Biosynthetic arginine decarboxylase (628 aa).

An N6-(pyridoxal phosphate)lysine modification is found at Lys-99. 279-289 (VDVGGGLGIDY) is a substrate binding site.

The protein belongs to the Orn/Lys/Arg decarboxylase class-II family. SpeA subfamily. Mg(2+) serves as cofactor. Requires pyridoxal 5'-phosphate as cofactor.

The catalysed reaction is L-arginine + H(+) = agmatine + CO2. Its function is as follows. Catalyzes the biosynthesis of agmatine from arginine. In Xanthomonas campestris pv. campestris (strain ATCC 33913 / DSM 3586 / NCPPB 528 / LMG 568 / P 25), this protein is Biosynthetic arginine decarboxylase.